Consider the following 328-residue polypeptide: tRNA dimethylallyltransferase (328 aa).

25–32 (GPTAVGKT) is a binding site for ATP. 27–32 (TAVGKT) lines the substrate pocket. Residues 50 to 53 (DSMQ) are interaction with substrate tRNA.

It belongs to the IPP transferase family. In terms of assembly, monomer. It depends on Mg(2+) as a cofactor.

The enzyme catalyses adenosine(37) in tRNA + dimethylallyl diphosphate = N(6)-dimethylallyladenosine(37) in tRNA + diphosphate. Catalyzes the transfer of a dimethylallyl group onto the adenine at position 37 in tRNAs that read codons beginning with uridine, leading to the formation of N6-(dimethylallyl)adenosine (i(6)A). In Halothermothrix orenii (strain H 168 / OCM 544 / DSM 9562), this protein is tRNA dimethylallyltransferase.